Consider the following 291-residue polypeptide: Probable peptide ABC transporter permease protein y4tQ (291 aa).

5 helical membrane-spanning segments follow: residues 28 to 48, 92 to 112, 137 to 157, 213 to 233, and 249 to 269; these read LVLLGGGILLLLILLALAAPL, LIVGLLSAVCAAVCGLLIGVI, LLAIALLSLTGPGIGILIVAI, ATVCASAIMTEAGLSFIGVGV, and LFLAIAPLTIFAPGLCLAVTV. Positions 88-276 constitute an ABC transmembrane type-1 domain; the sequence is ARISLIVGLL…VTVLAVNLLG (189 aa).

This sequence belongs to the binding-protein-dependent transport system permease family. OppBC subfamily.

The protein resides in the cell inner membrane. Probably part of the binding-protein-dependent transport system y4tOPQRS for a peptide. Probably responsible for the translocation of the substrate across the membrane. This Sinorhizobium fredii (strain NBRC 101917 / NGR234) protein is Probable peptide ABC transporter permease protein y4tQ.